We begin with the raw amino-acid sequence, 66 residues long: Large ribosomal subunit protein bL35 (66 aa).

Belongs to the bacterial ribosomal protein bL35 family.

This chain is Large ribosomal subunit protein bL35, found in Borreliella burgdorferi (strain ATCC 35210 / DSM 4680 / CIP 102532 / B31) (Borrelia burgdorferi).